We begin with the raw amino-acid sequence, 624 residues long: Multicopper oxidase elcG (624 aa).

The N-terminal stretch at 1–18 (MACNILNFLTGLLSLSST) is a signal peptide. Plastocyanin-like domains lie at 48 to 160 (PGRA…IERG) and 216 to 373 (CMDA…TIRI). Asparagine 65 is a glycosylation site (N-linked (GlcNAc...) asparagine). 4 residues coordinate Cu cation: histidine 96, histidine 98, histidine 140, and histidine 142. 3 N-linked (GlcNAc...) asparagine glycosylation sites follow: asparagine 271, asparagine 296, and asparagine 464. The Plastocyanin-like 3 domain maps to 474–603 (FLFQDPSQIE…GGMGVVILDG (130 aa)). Cu cation contacts are provided by histidine 511, histidine 514, histidine 516, histidine 585, cysteine 586, histidine 587, and histidine 591.

The protein belongs to the multicopper oxidase family.

It participates in secondary metabolite biosynthesis. Functionally, multicopper oxidase; part of the gene cluster that mediates the biosynthesis of elsinochrome C, a perelyenequinone phytotoxin structurally similar to cercosporin. The first step of elsinochrome C biosynthesis is performed by the polyketide synthase elcA which catalyzes the formation of nor-toralactone. The starter unit acyltransferase (SAT) domain of elcA initiates polyketide extension by the selective utilization of acetyl-CoA, which is elongated to the heptaketide in the beta-ketoacyl synthase (KS) domain by successive condensations with six malonyl units introduced by the malonyl acyltransferase (MAT) domain. The product template (PT) domain catalyzes C4-C9 and C2-C11 aldol cyclizations and dehydrations to a trihydroxynaphthalene, which is thought to be delivered to the thioesterase (TE) domain for product release. The bifunctional enzyme elcB then methylates nor-toralactone to toralactone before conducting an unusual oxidative aromatic ring opening. The next step in perylenequinone biosynthesis is an O-methylation at the nascent OH-6 of the elcB product performed by the O-methyltransferase elcD. The oxidative coupling of the two monomeric naphthol units in perylenequinone biosynthesis is catalyzed by the FAD-dependent monooxygenase elcE and the multicopper oxidase elcG. ElcG might catalyze the first intermolecular coupling in a regio- and stereo-selective manner via a phenol radical coupling mechanism and the elcE could forge the second C-C bond intramolecularly via a hydride transfer mechanism. The fasciclin domain-containing protein elcF might also play a role duting this step. The last piece of the puzzle in the biosynthesis of elsinochrome C is the additional annulation by enolate coupling to afford the dihydrobenzo(ghi)perylenequinone system, catalyzed by the FAD-dependent monooxygenase elcH. This Phaeosphaeria nodorum (strain SN15 / ATCC MYA-4574 / FGSC 10173) (Glume blotch fungus) protein is Multicopper oxidase elcG.